The sequence spans 612 residues: Cytoplasmic dynein 1 intermediate chain 2 (612 aa).

2 stretches are compositionally biased toward basic and acidic residues: residues 1–13 (MSDK…ELER) and 20–43 (QIRE…KKEA). A disordered region spans residues 1-188 (MSDKSDLKAE…PHELTEEEKQ (188 aa)). Ser-2 is modified (N-acetylserine). Residue Ser-51 is modified to Diphosphoserine. A phosphoserine mark is found at Ser-51 and Ser-84. A compositionally biased stretch (low complexity) spans 82 to 91 (PSSKSVSTPS). Thr-89 is modified (phosphothreonine). Phosphoserine occurs at positions 91, 95, and 98. The span at 164 to 188 (EKTLKKDEENDSKAPPHELTEEEKQ) shows a compositional bias: basic and acidic residues. 7 WD repeats span residues 251 to 300 (SKHR…TTPE), 304 to 344 (HCQS…RTPV), 353 to 394 (AHTH…HPQD), 403 to 443 (SKAV…AGIS), 448 to 493 (GHQG…PLYS), 496 to 536 (DNSD…EVPT), and 542 to 581 (EGNP…AVPR).

Belongs to the dynein intermediate chain family. As to quaternary structure, homodimer. The cytoplasmic dynein 1 complex consists of two catalytic heavy chains (HCs) and a number of non-catalytic subunits presented by intermediate chains (ICs), light intermediate chains (LICs) and light chains (LCs); the composition seems to vary in respect to the IC, LIC and LC composition. The heavy chain homodimer serves as a scaffold for the probable homodimeric assembly of the respective non-catalytic subunits. The ICs and LICs bind directly to the HC dimer and the LCs assemble on the IC dimer. Interacts with DYNLT3. Interacts with DYNLT1. Interacts (dephosphorylated at Ser-84) with DCTN1. Interacts with BICD2. Interacts with SPEF2. Interacts with CFAP61. In terms of processing, the phosphorylation status of Ser-84 appears to be involved in dynactin-dependent target binding. Post-translationally, pyrophosphorylation by 5-diphosphoinositol pentakisphosphate (5-IP7) promotes interaction with DCTN1. Serine pyrophosphorylation is achieved by Mg(2+)-dependent, but enzyme independent transfer of a beta-phosphate from a inositol pyrophosphate to a pre-phosphorylated serine residue.

The protein localises to the cytoplasm. It is found in the cytoskeleton. Acts as one of several non-catalytic accessory components of the cytoplasmic dynein 1 complex that are thought to be involved in linking dynein to cargos and to adapter proteins that regulate dynein function. Cytoplasmic dynein 1 acts as a motor for the intracellular retrograde motility of vesicles and organelles along microtubules. The intermediate chains mediate the binding of dynein to dynactin via its 150 kDa component (p150-glued) DCTN1. Involved in membrane-transport, such as Golgi apparatus, late endosomes and lysosomes. The chain is Cytoplasmic dynein 1 intermediate chain 2 (Dync1i2) from Mus musculus (Mouse).